The primary structure comprises 523 residues: Ribonuclease Y (523 aa).

The chain crosses the membrane as a helical span at residues 7-24 (LSSLASALLAGGGTYLVY). The region spanning 213–279 (LINVVNLPND…TRTIEALVED (67 aa)) is the KH domain. One can recognise an HD domain in the interval 339-432 (ALGHSLEVAN…VCAADALSAA (94 aa)).

It belongs to the RNase Y family.

It is found in the cell membrane. Functionally, endoribonuclease that initiates mRNA decay. This Wolinella succinogenes (strain ATCC 29543 / DSM 1740 / CCUG 13145 / JCM 31913 / LMG 7466 / NCTC 11488 / FDC 602W) (Vibrio succinogenes) protein is Ribonuclease Y.